A 97-amino-acid polypeptide reads, in one-letter code: UPF0213 protein BLi00048/BL00536 (97 aa).

The 76-residue stretch at 4–79 (NSHYFYVLSC…KKLSRKNKER (76 aa)) folds into the GIY-YIG domain.

It belongs to the UPF0213 family.

The protein is UPF0213 protein BLi00048/BL00536 of Bacillus licheniformis (strain ATCC 14580 / DSM 13 / JCM 2505 / CCUG 7422 / NBRC 12200 / NCIMB 9375 / NCTC 10341 / NRRL NRS-1264 / Gibson 46).